Reading from the N-terminus, the 101-residue chain is Gamma-secretase subunit PEN-2 (101 aa).

Topologically, residues M1 to K17 are cytoplasmic. The segment at residues Y18 to W36 is an intramembrane region (helical). Residues F37–V57 lie on the Cytoplasmic side of the membrane. Residues W58–F78 traverse the membrane as a helical segment. The Lumenal portion of the chain corresponds to Q79–P101.

The protein belongs to the PEN-2 family. The functional gamma-secretase complex is composed of at least four polypeptides: a presenilin homodimer (PSEN1 or PSEN2), nicastrin (NCSTN), APH1 (APH1A or APH1B) and PSENEN.

Its subcellular location is the endoplasmic reticulum membrane. The protein resides in the golgi apparatus. It localises to the golgi stack membrane. The protein localises to the cell membrane. It is found in the membrane. Functionally, essential subunit of the gamma-secretase complex, an endoprotease complex that catalyzes the intramembrane cleavage of integral membrane proteins such as Notch receptors and APP (amyloid-beta precursor protein). The gamma-secretase complex plays a role in Notch and Wnt signaling cascades and regulation of downstream processes via its role in processing key regulatory proteins, and by regulating cytosolic CTNNB1 levels. PSENEN modulates both endoproteolysis of presenilin and gamma-secretase activity. In Bos taurus (Bovine), this protein is Gamma-secretase subunit PEN-2 (PSENEN).